Reading from the N-terminus, the 124-residue chain is Succinate dehydrogenase cytochrome b556 subunit (124 aa).

The Cytoplasmic segment spans residues 1–29; it reads MTKTKQEIYNKRPTSPHLSIYKLQISSTL. The chain crosses the membrane as a helical span at residues 30–55; it reads SILHRMTGVALFFAVSILAWWLILSK. Residues 56–67 lie on the Periplasmic side of the membrane; it reads YDNNYLQFANCC. The helical transmembrane segment at 68–88 threads the bilayer; that stretch reads IIKICLVAVSYAWFYHLCNGI. Histidine 83 contacts heme. Over 89–103 the chain is Cytoplasmic; the sequence is RHLFWDIGYGFSIKA. A helical membrane pass occupies residues 104–124; that stretch reads VNITGWCVVVCSILLTMLLWV.

Belongs to the cytochrome b560 family. As to quaternary structure, part of an enzyme complex containing four subunits: a flavoprotein, an iron-sulfur protein, plus two membrane-anchoring proteins, SdhC and SdhD. The complex can form homotrimers. Heme is required as a cofactor.

Its subcellular location is the cell inner membrane. It participates in carbohydrate metabolism; tricarboxylic acid cycle. In terms of biological role, membrane-anchoring subunit of succinate dehydrogenase (SDH). This is Succinate dehydrogenase cytochrome b556 subunit (sdhC) from Rickettsia felis (strain ATCC VR-1525 / URRWXCal2) (Rickettsia azadi).